The chain runs to 46 residues: Cuticle protein 4.9 (46 aa).

Its function is as follows. Component of the cuticle of migratory locust which contains more than 100 different structural proteins. The sequence is that of Cuticle protein 4.9 from Locusta migratoria (Migratory locust).